Here is a 184-residue protein sequence, read N- to C-terminus: MSVDFSSERVCYVHCSFCTTILAVSVPYASLFTLVTVRCGHCTNLLSLNIGVSLHQTSAPPIHQDLQPHRQHTTSLVTRKDCASSSRSTNNLSENIDREAPRMPPIRPPEKRQRVPSAYNRFIKEEIQRIKACNPEISHREAFSTAAKNWAHFPHIHFGLKLDGNKKGKQLDQSVAGQKSNGYY.

The C4-type zinc-finger motif lies at 15–42 (CSFCTTILAVSVPYASLFTLVTVRCGHC). Composition is skewed to polar residues over residues 76–94 (LVTR…NLSE) and 171–184 (LDQS…NGYY). 2 disordered regions span residues 76-115 (LVTR…RQRV) and 162-184 (LDGN…NGYY).

Belongs to the YABBY family. In terms of assembly, interacts with SPL/NZZ and SPEAR2. In terms of tissue distribution, expressed at low levels in abaxial regions of lateral aerial organ primordia leading to cotyledons, leaves, flower meristems, sepals, petals, stamen and carpels, but not in roots.

It localises to the nucleus. Functionally, involved in the abaxial cell fate determination during embryogenesis and organogenesis. The polypeptide is Putative axial regulator YABBY 2 (YAB2) (Arabidopsis thaliana (Mouse-ear cress)).